Reading from the N-terminus, the 410-residue chain is Na(+)-translocating NADH-quinone reductase subunit B (410 aa).

Helical transmembrane passes span 56 to 76, 119 to 139, and 159 to 179; these read MMIL…YNVG, LFGA…GGFW, and SILF…ALGI. Thr232 is modified (FMN phosphoryl threonine). The next 5 helical transmembrane spans lie at 266–286, 293–313, 318–338, 347–367, and 377–397; these read GSIG…IVFA, IIAG…FIGS, MFAM…GMLF, SFTN…CVLI, and GMML…YFVA.

Belongs to the NqrB/RnfD family. In terms of assembly, composed of six subunits; NqrA, NqrB, NqrC, NqrD, NqrE and NqrF. It depends on FMN as a cofactor.

It localises to the cell inner membrane. It catalyses the reaction a ubiquinone + n Na(+)(in) + NADH + H(+) = a ubiquinol + n Na(+)(out) + NAD(+). NQR complex catalyzes the reduction of ubiquinone-1 to ubiquinol by two successive reactions, coupled with the transport of Na(+) ions from the cytoplasm to the periplasm. NqrA to NqrE are probably involved in the second step, the conversion of ubisemiquinone to ubiquinol. The protein is Na(+)-translocating NADH-quinone reductase subunit B of Neisseria meningitidis serogroup B (strain ATCC BAA-335 / MC58).